The following is a 96-amino-acid chain: Protein ORF5 (96 aa).

Belongs to the microviridae C protein family.

Its function is as follows. Plays a central role in the packaging of viral DNA into phage procapsid, which occurs in the late stage of infection. Can interact with the replicative complex after the completion of one round of DNA synthesis. When protein ORF5 is bound to the replicative form, the complex becomes accessible to procapsid and serves as a DNA packaging apparatus. The polypeptide is Protein ORF5 (Chlamydia phage 1 (Bacteriophage Chp1)).